Here is a 148-residue protein sequence, read N- to C-terminus: Cytochrome c-type biogenesis protein CcmE (148 aa).

Residues 1–7 (MKARNKR) lie on the Cytoplasmic side of the membrane. The helical; Signal-anchor for type II membrane protein transmembrane segment at 8 to 28 (LMLVGGGIALLVAAAALVLSA) threads the bilayer. The Periplasmic portion of the chain corresponds to 29-148 (FQQNLVFFHT…AHKTATTVQQ (120 aa)). Heme-binding residues include H123 and Y127.

It belongs to the CcmE/CycJ family.

It is found in the cell inner membrane. In terms of biological role, heme chaperone required for the biogenesis of c-type cytochromes. Transiently binds heme delivered by CcmC and transfers the heme to apo-cytochromes in a process facilitated by CcmF and CcmH. This is Cytochrome c-type biogenesis protein CcmE from Azoarcus sp. (strain BH72).